Here is a 939-residue protein sequence, read N- to C-terminus: MREETRQIFLQTIDSDAGKRSIAEAMLMDLEKQPGFVMSLPHTCMKDGDPIVKRVAAIYFKNAIIKQWRSNEYSEARKYLVENILDLFLYGDEVTRTAYNAILVNIFNNEKLSDLDGMFRKAAGFMRTSEANHVLTALNMYERVFDAEKIKYNLEQVLGLMFDTAGKDILEKVYGFLESGNYGMVKTGMIVLSKSYCYYSIPDFLSAIGTFSYVFNLSLRILNLEGSNEDLLESKKWAAYFMYKSCSKGIKKFYKKSELSEYITDMNRFQMVYATFLKIIQERSQQTIDIELYAIDFFVLLTSDADFFRYMEPNLSYFISGYILPLYSLSDSEEDDFENDPDKYLREKYNFFGNGLRSSLNTLFCEIISKVKQKEETFQGIISYLLSILGGSKETPSRDNIRAAYGSFFLLASIKSTLMKKARNVLEYIVANHVIPALRGNSCILKSQACYFLSTIEEDLPINGLALEALDNTHKLMKSSHRALMVESTLAMSFFLFNEASSEKFRQLIPETVESILSLSNTYNLEPLTMLLDSIIGYYPEEISKYAPELVGSISRITLSHLMNESDVGEDKQMVVSGFLRSIESLILSLDQRSLVLKYSYVNSYDVISFILKEEKSDFYQEALDILNGYVYMIKEIEGSMWGLFQMVLNLPIDEITVYSTEVADLIDNFITYGKTSVMDAGILGSICSVISKLCLCNEENFLDEDFIGGCRIIESIILNIGNELLSKDPSRLPLFISVAISGEKMIDEDGPAIVYALELIMNCFILRPKETIRILREQKYLQSFFEKLFSQKNKFKRVHDKKICMLFIGTICRLQDGALPELDVHGLGEVLVATVTSLPEAIRLRNQMKDDEDAPPPLVNTEDDQCLDASDISCTDILEEDIYFETELDKFEPFGYISSILSSPASGTYAEKIISTMTDEQKDSLSTVLNGERIIQKI.

Residues 23 to 90 (AEAMLMDLEK…VENILDLFLY (68 aa)) form the Importin N-terminal domain.

This sequence belongs to the importin beta family.

The protein localises to the nucleus. The protein resides in the cytoplasm. In terms of biological role, active in protein import into the nucleus. The protein is Probable importin ECU10_0620 of Encephalitozoon cuniculi (strain GB-M1) (Microsporidian parasite).